We begin with the raw amino-acid sequence, 367 residues long: Selenoprotein Pa (367 aa).

The signal sequence occupies residues 1 to 19; it reads MWKALSLTLALCLLVGCSA. Position 59 (U59) is a non-standard amino acid, selenocysteine. N109 is a glycosylation site (N-linked (GlcNAc...) asparagine). Positions 191–220 are enriched in basic and acidic residues; that stretch reads EVNKPVEEEPRQDHGHHEHGHHEHQGEAER. Residues 191-241 are disordered; that stretch reads EVNKPVEEEPRQDHGHHEHGHHEHQGEAERHRHGHHHPHHHHHHHRGQQQV. Positions 221 to 237 are enriched in basic residues; that stretch reads HRHGHHHPHHHHHHHRG. Non-standard amino acids (selenocysteine) are located at U267, U273, U279, U290, U292, U294, U310, U320, U322, U336, U338, U346, U353, U355, U362, and U364. The interval 309–367 is disordered; it reads LUHCDEPLPASUPUQGLKEQDNHIKETUQURPAPPAEUELSQPTUVUPAGDATUGURKK. Residues 326 to 336 show a composition bias toward basic and acidic residues; that stretch reads KEQDNHIKETU.

Belongs to the selenoprotein P family.

The protein resides in the secreted. In terms of biological role, might be responsible for some of the extracellular antioxidant defense properties of selenium or might be involved in the transport of selenium. In Danio rerio (Zebrafish), this protein is Selenoprotein Pa (sepp1a).